The chain runs to 277 residues: DNA-binding transcriptional activator MhpR (277 aa).

One can recognise an HTH iclR-type domain in the interval V12 to I74. Positions V34–E53 form a DNA-binding region, H-T-H motif. In terms of domain architecture, IclR-ED spans I89–S262.

Functionally, activator of the mhpABCDFE operon coding for components of the 3-hydroxyphenylpropionate degradation pathway. This is DNA-binding transcriptional activator MhpR (mhpR) from Escherichia coli (strain K12).